A 158-amino-acid chain; its full sequence is 2-C-methyl-D-erythritol 2,4-cyclodiphosphate synthase (158 aa).

The a divalent metal cation site is built by Asp-8 and His-10. Residues 8–10 (DVH) and 34–35 (HS) contribute to the 4-CDP-2-C-methyl-D-erythritol 2-phosphate site. His-42 is an a divalent metal cation binding site. 4-CDP-2-C-methyl-D-erythritol 2-phosphate contacts are provided by residues 56–58 (DIG), 61–65 (FPDTD), 100–106 (AQKPKML), 132–135 (TTEE), Phe-139, and Lys-142.

This sequence belongs to the IspF family. Homotrimer. A divalent metal cation serves as cofactor.

It carries out the reaction 4-CDP-2-C-methyl-D-erythritol 2-phosphate = 2-C-methyl-D-erythritol 2,4-cyclic diphosphate + CMP. The protein operates within isoprenoid biosynthesis; isopentenyl diphosphate biosynthesis via DXP pathway; isopentenyl diphosphate from 1-deoxy-D-xylulose 5-phosphate: step 4/6. Involved in the biosynthesis of isopentenyl diphosphate (IPP) and dimethylallyl diphosphate (DMAPP), two major building blocks of isoprenoid compounds. Catalyzes the conversion of 4-diphosphocytidyl-2-C-methyl-D-erythritol 2-phosphate (CDP-ME2P) to 2-C-methyl-D-erythritol 2,4-cyclodiphosphate (ME-CPP) with a corresponding release of cytidine 5-monophosphate (CMP). The protein is 2-C-methyl-D-erythritol 2,4-cyclodiphosphate synthase of Clostridium tetani (strain Massachusetts / E88).